The sequence spans 206 residues: GTP cyclohydrolase 1 (206 aa).

Zn(2+)-binding residues include Cys-98, His-101, and Cys-169.

Belongs to the GTP cyclohydrolase I family. As to quaternary structure, toroid-shaped homodecamer, composed of two pentamers of five dimers.

It catalyses the reaction GTP + H2O = 7,8-dihydroneopterin 3'-triphosphate + formate + H(+). It participates in cofactor biosynthesis; 7,8-dihydroneopterin triphosphate biosynthesis; 7,8-dihydroneopterin triphosphate from GTP: step 1/1. In Helicobacter hepaticus (strain ATCC 51449 / 3B1), this protein is GTP cyclohydrolase 1.